A 350-amino-acid chain; its full sequence is Phosphate acyltransferase (350 aa).

This sequence belongs to the PlsX family. As to quaternary structure, homodimer. Probably interacts with PlsY.

The protein localises to the cytoplasm. It catalyses the reaction a fatty acyl-[ACP] + phosphate = an acyl phosphate + holo-[ACP]. It functions in the pathway lipid metabolism; phospholipid metabolism. Functionally, catalyzes the reversible formation of acyl-phosphate (acyl-PO(4)) from acyl-[acyl-carrier-protein] (acyl-ACP). This enzyme utilizes acyl-ACP as fatty acyl donor, but not acyl-CoA. This chain is Phosphate acyltransferase, found in Phenylobacterium zucineum (strain HLK1).